We begin with the raw amino-acid sequence, 363 residues long: MSTSTIRVAIAGVGNCATSLIQGVEYYRNADPSETVPGLMHVKFGDYHVGDIEFVAAFDVDAEKVGIDLADATEASQNCTIKIADVPQTGINVLRGPTLDGLGDHYRATIDESTAEPVDVVQALIDAKADVLVSYLPVGSEEADKFYAQAAIDAGCAFVNALPVFIASDPEWAKKFTDAGIPIVGDDIKSQIGATITHRVLARLFEERGVRVDRTMQLNVGGNMDFKNMLDRNRLESKKVSKTQAVTSNIPDGPLSGKVEDRNVHIGPSDHVQWLDDRKWAYVRLEGTAFGGVPLNLEYKLEVWDSPNSAGIIIDAVRAAKIALDRGIGGPIMPASSYLMKSPPEQLPDDVARERLEAFIIEA.

6 residues coordinate NAD(+): Asp68, Ala127, Tyr147, Ser190, Asp225, and Lys238.

The protein belongs to the myo-inositol 1-phosphate synthase family. In terms of assembly, monomer. Requires NAD(+) as cofactor.

The catalysed reaction is D-glucose 6-phosphate = 1D-myo-inositol 3-phosphate. It participates in polyol metabolism; myo-inositol biosynthesis; myo-inositol from D-glucose 6-phosphate: step 1/2. In terms of biological role, key enzyme in myo-inositol biosynthesis pathway that catalyzes the conversion of glucose 6-phosphate to 1D-myo-inositol 3-phosphate in a NAD-dependent manner. Plays a key role in oxidative stress resistance as its product is the precursor of the protective antioxidant mycothiol (MSH or AcCys-GlcN-Ins). The chain is Inositol-3-phosphate synthase from Corynebacterium glutamicum (strain ATCC 13032 / DSM 20300 / JCM 1318 / BCRC 11384 / CCUG 27702 / LMG 3730 / NBRC 12168 / NCIMB 10025 / NRRL B-2784 / 534).